The following is a 425-amino-acid chain: GTPase Obg (425 aa).

Residues 1–158 (MFVDQVKVYV…RYIVMELKLI (158 aa)) enclose the Obg domain. The interval 118 to 144 (KGGRGGRGNNRFANSSNPAPHISENGE) is disordered. The OBG-type G domain maps to 159 to 327 (ADVGLVGYPS…LMYAIGDTLA (169 aa)). ATP is bound by residues 165–172 (GYPSVGKS), 190–194 (FTTLT), 211–214 (DLPG), 281–284 (NKME), and 308–310 (SAA). Residues S172 and T192 each contribute to the Mg(2+) site. One can recognise an OCT domain in the interval 348–425 (RAEKEPDAFE…IGKLEFDFVE (78 aa)).

It belongs to the TRAFAC class OBG-HflX-like GTPase superfamily. OBG GTPase family. Monomer. Mg(2+) serves as cofactor.

Its subcellular location is the cytoplasm. Functionally, an essential GTPase which binds GTP, GDP and possibly (p)ppGpp with moderate affinity, with high nucleotide exchange rates and a fairly low GTP hydrolysis rate. Plays a role in control of the cell cycle, stress response, ribosome biogenesis and in those bacteria that undergo differentiation, in morphogenesis control. In Brevibacillus brevis (strain 47 / JCM 6285 / NBRC 100599), this protein is GTPase Obg.